A 347-amino-acid chain; its full sequence is Holliday junction branch migration complex subunit RuvB (347 aa).

The tract at residues 4 to 184 is large ATPase domain (RuvB-L); sequence QDRIVDGHAS…FGIVQRLEFY (181 aa). ATP contacts are provided by residues R24, G65, K68, T69, T70, 131–133, R174, Y184, and R221; that span reads EDF. Residue T69 coordinates Mg(2+). The segment at 185 to 255 is small ATPAse domain (RuvB-S); the sequence is SVQDLTHIVK…IADSALNMLN (71 aa). Residues 258–347 form a head domain (RuvB-H) region; that stretch reads HHGFDHMDRR…SQQQDSLPGI (90 aa). DNA-binding residues include R294, R313, and R318.

This sequence belongs to the RuvB family. Homohexamer. Forms an RuvA(8)-RuvB(12)-Holliday junction (HJ) complex. HJ DNA is sandwiched between 2 RuvA tetramers; dsDNA enters through RuvA and exits via RuvB. An RuvB hexamer assembles on each DNA strand where it exits the tetramer. Each RuvB hexamer is contacted by two RuvA subunits (via domain III) on 2 adjacent RuvB subunits; this complex drives branch migration. In the full resolvosome a probable DNA-RuvA(4)-RuvB(12)-RuvC(2) complex forms which resolves the HJ.

It localises to the cytoplasm. The enzyme catalyses ATP + H2O = ADP + phosphate + H(+). The RuvA-RuvB-RuvC complex processes Holliday junction (HJ) DNA during genetic recombination and DNA repair, while the RuvA-RuvB complex plays an important role in the rescue of blocked DNA replication forks via replication fork reversal (RFR). RuvA specifically binds to HJ cruciform DNA, conferring on it an open structure. The RuvB hexamer acts as an ATP-dependent pump, pulling dsDNA into and through the RuvAB complex. RuvB forms 2 homohexamers on either side of HJ DNA bound by 1 or 2 RuvA tetramers; 4 subunits per hexamer contact DNA at a time. Coordinated motions by a converter formed by DNA-disengaged RuvB subunits stimulates ATP hydrolysis and nucleotide exchange. Immobilization of the converter enables RuvB to convert the ATP-contained energy into a lever motion, pulling 2 nucleotides of DNA out of the RuvA tetramer per ATP hydrolyzed, thus driving DNA branch migration. The RuvB motors rotate together with the DNA substrate, which together with the progressing nucleotide cycle form the mechanistic basis for DNA recombination by continuous HJ branch migration. Branch migration allows RuvC to scan DNA until it finds its consensus sequence, where it cleaves and resolves cruciform DNA. The sequence is that of Holliday junction branch migration complex subunit RuvB from Teredinibacter turnerae (strain ATCC 39867 / T7901).